The sequence spans 1661 residues: Cortactin-binding protein 2 (1661 aa).

Disordered stretches follow at residues 1 to 27 (MATD…AEAT), 206 to 226 (EKKR…RSTE), 329 to 438 (TVPV…SLHP), 454 to 477 (NAND…SPTS), and 493 to 612 (QALS…LPPK). Residues 124-280 (KMQERMSTQL…EQLKRGNDSK (157 aa)) adopt a coiled-coil conformation. Positions 383–394 (GPSTGSTPDLPS) are enriched in low complexity. Residues 412 to 426 (SIASQNYSQASSLHS) show a composition bias toward polar residues. Low complexity predominate over residues 454–466 (NANDQDQNGNTTQ). Residues 467–477 (SPPSRDVSPTS) are compositionally biased toward polar residues. Arg-497 carries the post-translational modification Asymmetric dimethylarginine. ANK repeat units follow at residues 707–737 (GRPT…DINY), 741–770 (DGHS…QVNA), 774–803 (NGFT…NINH), 807–836 (GGQT…DRSV), and 840–869 (DGWT…PACG). The disordered stretch occupies residues 876–896 (EPESDVFDLDGGGERPEGTVK). The stretch at 910–940 (EGWTAAHIAASKGFKNCLEILCQHGGLEPER) is one ANK 6 repeat. Residues 1444–1480 (GKKKGENGAWRKVSTSPRKKSGRFPSPTWSKPDLSDE) form a disordered region. Ser-1522 is modified (phosphoserine). Disordered regions lie at residues 1555 to 1597 (RRFD…SNSK) and 1614 to 1661 (PRSK…KPNK). A compositionally biased stretch (polar residues) spans 1580–1597 (KEVSPLSSHQTTECSNSK). Over residues 1622–1636 (SQNTRRSSSSSNTRQ) the composition is skewed to low complexity. Positions 1643 to 1661 (SKDEIWNLRKNEQVEKPNK) are enriched in basic and acidic residues.

As to quaternary structure, interacts with CTTN/cortactin SH3 domain. Interacts with STRN, STRN4/zinedin and MOB4/phocein; this interactions mediate the association with the STRIPAK core complex and may regulate dendritic spine distribution of the STRIPAK complex in hippocampal neurons. Activation of glutamate receptors weakens the interaction with STRN and STRN4.

Its subcellular location is the cytoplasm. The protein localises to the cell cortex. It is found in the cell projection. The protein resides in the dendritic spine. Functionally, regulates the dendritic spine distribution of CTTN/cortactin in hippocampal neurons, and thus controls dendritic spinogenesis and dendritic spine maintenance. Associates with the striatin-interacting phosphatase and kinase (STRIPAK) core complex to regulate dendritic spine distribution of the STRIPAK complex in hippocampal neurons. The sequence is that of Cortactin-binding protein 2 (CTTNBP2) from Loxodonta africana (African elephant).